The following is a 252-amino-acid chain: Geranylgeranylglyceryl phosphate synthase (252 aa).

The Mg(2+) site is built by Asp26 and Ser55. Residues 174-180 (YLEAGSG), 205-206 (GG), and 227-228 (GT) contribute to the sn-glycerol 1-phosphate site.

Belongs to the GGGP/HepGP synthase family. Group II subfamily. In terms of assembly, homotetramer. Homohexamer. Requires Mg(2+) as cofactor.

It localises to the cytoplasm. It catalyses the reaction sn-glycerol 1-phosphate + (2E,6E,10E)-geranylgeranyl diphosphate = sn-3-O-(geranylgeranyl)glycerol 1-phosphate + diphosphate. It functions in the pathway membrane lipid metabolism; glycerophospholipid metabolism. Prenyltransferase that catalyzes the transfer of the geranylgeranyl moiety of geranylgeranyl diphosphate (GGPP) to the C3 hydroxyl of sn-glycerol-1-phosphate (G1P). This reaction is the first ether-bond-formation step in the biosynthesis of archaeal membrane lipids. In Thermococcus kodakarensis (strain ATCC BAA-918 / JCM 12380 / KOD1) (Pyrococcus kodakaraensis (strain KOD1)), this protein is Geranylgeranylglyceryl phosphate synthase.